The primary structure comprises 124 residues: Glycine cleavage system H protein (124 aa).

Residues 19–101 enclose the Lipoyl-binding domain; it reads VATVGITNHA…EGEGWLFKME (83 aa). Lysine 60 bears the N6-lipoyllysine mark.

It belongs to the GcvH family. The glycine cleavage system is composed of four proteins: P, T, L and H. (R)-lipoate serves as cofactor.

In terms of biological role, the glycine cleavage system catalyzes the degradation of glycine. The H protein shuttles the methylamine group of glycine from the P protein to the T protein. In Thermotoga maritima (strain ATCC 43589 / DSM 3109 / JCM 10099 / NBRC 100826 / MSB8), this protein is Glycine cleavage system H protein.